The chain runs to 167 residues: Ribosome maturation factor RimP (167 aa).

Belongs to the RimP family.

It localises to the cytoplasm. In terms of biological role, required for maturation of 30S ribosomal subunits. This chain is Ribosome maturation factor RimP, found in Cytophaga hutchinsonii (strain ATCC 33406 / DSM 1761 / CIP 103989 / NBRC 15051 / NCIMB 9469 / D465).